The sequence spans 266 residues: Type III pantothenate kinase (266 aa).

Residue 6–13 (DIGNSRIK) coordinates ATP. Residues Y94 and 101-104 (GIDR) each bind substrate. Residue D103 is the Proton acceptor of the active site. K(+) is bound at residue D128. T131 contributes to the ATP binding site. Position 183 (T183) interacts with substrate.

Belongs to the type III pantothenate kinase family. In terms of assembly, homodimer. NH4(+) is required as a cofactor. Requires K(+) as cofactor.

It localises to the cytoplasm. The catalysed reaction is (R)-pantothenate + ATP = (R)-4'-phosphopantothenate + ADP + H(+). It participates in cofactor biosynthesis; coenzyme A biosynthesis; CoA from (R)-pantothenate: step 1/5. In terms of biological role, catalyzes the phosphorylation of pantothenate (Pan), the first step in CoA biosynthesis. The protein is Type III pantothenate kinase of Nitrosococcus oceani (strain ATCC 19707 / BCRC 17464 / JCM 30415 / NCIMB 11848 / C-107).